A 399-amino-acid polypeptide reads, in one-letter code: A-type ATP synthase subunit C (399 aa).

Belongs to the V-ATPase V0D/AC39 subunit family. As to quaternary structure, the A-type ATPase is composed of subunits A(3), B(3), C, D, E(1 or 2), F, H(2), I and K(x).

The protein resides in the cell membrane. In terms of biological role, component of the A-type ATP synthase that produces ATP from ADP in the presence of a proton gradient across the membrane. The chain is A-type ATP synthase subunit C from Methanocaldococcus jannaschii (strain ATCC 43067 / DSM 2661 / JAL-1 / JCM 10045 / NBRC 100440) (Methanococcus jannaschii).